Here is a 212-residue protein sequence, read N- to C-terminus: Pyrrolidone-carboxylate peptidase (212 aa).

Active-site residues include E78, C141, and H165.

It belongs to the peptidase C15 family. In terms of assembly, homotetramer.

Its subcellular location is the cytoplasm. It carries out the reaction Release of an N-terminal pyroglutamyl group from a polypeptide, the second amino acid generally not being Pro.. Functionally, removes 5-oxoproline from various penultimate amino acid residues except L-proline. The protein is Pyrrolidone-carboxylate peptidase of Staphylococcus aureus (strain Mu3 / ATCC 700698).